Here is a 235-residue protein sequence, read N- to C-terminus: Flavonoid 3',5'-methyltransferase (235 aa).

Residues Val51, Glu73, 75–76 (GV), Ser81, Asp99, and Ala128 contribute to the S-adenosyl-L-methionine site. Position 151 (Asp151) interacts with a divalent metal cation. Asp153 contacts S-adenosyl-L-methionine. A divalent metal cation-binding residues include Asp177 and Asn178.

It belongs to the class I-like SAM-binding methyltransferase superfamily. Cation-dependent O-methyltransferase family. CCoAMT subfamily. The cofactor is a divalent metal cation.

The protein resides in the cytoplasm. The catalysed reaction is S-adenosyl-L-methionine + a 3'-hydroxyflavonoid = S-adenosyl-L-homocysteine + a 3'-methoxyflavonoid.. It catalyses the reaction S-adenosyl-L-methionine + a 5'-hydroxy-3'-methoxyflavonoid = S-adenosyl-L-homocysteine + a 3',5'-dimethoxyflavonoid.. The protein operates within pigment biosynthesis; anthocyanin biosynthesis. Mediates O-methylation of anthocyanins. Anthocyanins are major pigments in grapes: at ripening initiation in red grapevine berries, the exocarp turns color from green to red and then to purple due to the accumulation and extent of methylation of anthocyanins. Catalyzes both 3' and 5' O-methylation of anthocyanins, with a preference for glycosylated substrates. Active on both anthocyanins and flavonols in vitro. Most active with delphinidin 3-glucoside but also acts on cyanidin 3-glucoside, cyanidin, myricetin, quercetin and quercetin 3-glucoside. Not able to methylate flavan type skeletons with chiral centers, such as catechins or dihydroquercetin. This is Flavonoid 3',5'-methyltransferase (FAOMT) from Vitis vinifera (Grape).